The chain runs to 217 residues: Large ribosomal subunit protein uL3 (217 aa).

This sequence belongs to the universal ribosomal protein uL3 family. Part of the 50S ribosomal subunit. Forms a cluster with proteins L14 and L19.

In terms of biological role, one of the primary rRNA binding proteins, it binds directly near the 3'-end of the 23S rRNA, where it nucleates assembly of the 50S subunit. The protein is Large ribosomal subunit protein uL3 of Mycobacterium ulcerans (strain Agy99).